The chain runs to 511 residues: Putative polyol transporter 1 (511 aa).

12 helical membrane passes run 27–47 (FACAILASMTSIILGYDIGVM), 63–83 (VQLEILMGILNIYSLVGSGAA), 94–114 (YTIVLAGAFFFCGALLMGFAT), 124–144 (FVAGIGVGYAMMIAPVYTAEV), 151–171 (GFLTSFPEIFINIGILLGYVS), 186–206 (FMLGVGAVPSVFLAIGVLAMP), 284–304 (ILIACLGIHFAQQASGIDAVV), 324–344 (LATVAVGVVKTLFIVVGTCVV), 351–371 (ALLLTSMGGMFLSLTALGTSL), 384–404 (WAIGLAVTTVMTFVATFSIGA), 424–444 (GASLGVMLNRLMSGIIGMTFL), and 454–474 (GAFLLFAGVAAAAWVFFFTFL).

This sequence belongs to the major facilitator superfamily. Sugar transporter (TC 2.A.1.1) family.

The protein resides in the membrane. Its function is as follows. Plasma membrane sugar-proton symporter. This chain is Putative polyol transporter 1 (PLT1), found in Arabidopsis thaliana (Mouse-ear cress).